The sequence spans 75 residues: uncharacterized protein (75 aa).

In terms of domain architecture, SpoVT-AbrB spans 3-45 (TTVFLSNRSQAVRLPKAVALPENVKRVEVIAVGRTRIITPAGE).

It belongs to the VapB family.

This is an uncharacterized protein from Escherichia coli (strain K12).